Reading from the N-terminus, the 206-residue chain is Large ribosomal subunit protein uL4 (206 aa).

Residues 46–89 (GNRAQKTRAEVKHSTKKPWRQKGTGRARSGMTSSPLWRKGGRAF) form a disordered region. The span at 59–70 (STKKPWRQKGTG) shows a compositional bias: basic residues.

It belongs to the universal ribosomal protein uL4 family. Part of the 50S ribosomal subunit.

One of the primary rRNA binding proteins, this protein initially binds near the 5'-end of the 23S rRNA. It is important during the early stages of 50S assembly. It makes multiple contacts with different domains of the 23S rRNA in the assembled 50S subunit and ribosome. Functionally, forms part of the polypeptide exit tunnel. The protein is Large ribosomal subunit protein uL4 of Neisseria gonorrhoeae (strain NCCP11945).